Consider the following 490-residue polypeptide: Cobyric acid synthase (490 aa).

Residues 252-439 (RLKVVVPVLP…LHGLFESTAA (188 aa)) enclose the GATase cobBQ-type domain. Cys-333 acts as the Nucleophile in catalysis. Residue His-431 is part of the active site.

This sequence belongs to the CobB/CobQ family. CobQ subfamily.

The protein operates within cofactor biosynthesis; adenosylcobalamin biosynthesis. In terms of biological role, catalyzes amidations at positions B, D, E, and G on adenosylcobyrinic A,C-diamide. NH(2) groups are provided by glutamine, and one molecule of ATP is hydrogenolyzed for each amidation. In Pseudomonas aeruginosa (strain ATCC 15692 / DSM 22644 / CIP 104116 / JCM 14847 / LMG 12228 / 1C / PRS 101 / PAO1), this protein is Cobyric acid synthase.